Here is a 203-residue protein sequence, read N- to C-terminus: Large ribosomal subunit protein uL13 (203 aa).

Position 2 is an N-acetylalanine (A2). A Citrulline modification is found at R59. S77 carries the post-translational modification Phosphoserine. R140 is subject to Citrulline. K191 carries the N6-acetyllysine modification.

It belongs to the universal ribosomal protein uL13 family. As to quaternary structure, component of the 60S ribosome. Component of the GAIT complex. Interacts with EIF4G1. Phosphorylation at Ser-77 upon interferon-gamma treatment in macrophages involves a DAPK1-DAPK3 kinase cascade and is causing release from the ribosome, association with the GAIT complex and subsequent involvement in transcript-selective translation inhibition. In terms of processing, citrullinated by PADI4.

It localises to the cytoplasm. Associated with ribosomes but is not required for canonical ribosome function and has extra-ribosomal functions. Component of the GAIT (gamma interferon-activated inhibitor of translation) complex which mediates interferon-gamma-induced transcript-selective translation inhibition in inflammation processes. Upon interferon-gamma activation and subsequent phosphorylation dissociates from the ribosome and assembles into the GAIT complex which binds to stem loop-containing GAIT elements in the 3'-UTR of diverse inflammatory mRNAs (such as ceruplasmin) and suppresses their translation. In the GAIT complex interacts with m7G cap-bound eIF4G at or near the eIF3-binding site and blocks the recruitment of the 43S ribosomal complex. Involved in methylation of rRNA. The chain is Large ribosomal subunit protein uL13 (Rpl13a) from Rattus norvegicus (Rat).